The following is a 526-amino-acid chain: Peptide chain release factor 3 (526 aa).

In terms of domain architecture, tr-type G spans 9–277 (DLRRTFAIIS…GLTKWAPKPL (269 aa)). Residues 18 to 25 (SHPDAGKT), 86 to 90 (DTPGH), and 140 to 143 (NKMD) each bind GTP.

Belongs to the TRAFAC class translation factor GTPase superfamily. Classic translation factor GTPase family. PrfC subfamily.

The protein localises to the cytoplasm. Its function is as follows. Increases the formation of ribosomal termination complexes and stimulates activities of RF-1 and RF-2. It binds guanine nucleotides and has strong preference for UGA stop codons. It may interact directly with the ribosome. The stimulation of RF-1 and RF-2 is significantly reduced by GTP and GDP, but not by GMP. This is Peptide chain release factor 3 from Colwellia psychrerythraea (strain 34H / ATCC BAA-681) (Vibrio psychroerythus).